The sequence spans 87 residues: Small ribosomal subunit protein bS18 (87 aa).

A compositionally biased stretch (basic and acidic residues) spans 1–20; that stretch reads MAGKSSGDRRKPIRKGKDGK. The interval 1-24 is disordered; sequence MAGKSSGDRRKPIRKGKDGKNAAP.

It belongs to the bacterial ribosomal protein bS18 family. As to quaternary structure, part of the 30S ribosomal subunit. Forms a tight heterodimer with protein bS6.

Binds as a heterodimer with protein bS6 to the central domain of the 16S rRNA, where it helps stabilize the platform of the 30S subunit. This chain is Small ribosomal subunit protein bS18, found in Leifsonia xyli subsp. xyli (strain CTCB07).